Consider the following 206-residue polypeptide: MRFTVAIDGPAAAGKGTISRAVATHFRFAHLDTGLLYRAVGAKVTEGADPVAAAEGLDLADLARDDLRSAEAGQAASRVAALPEVRAALVAFQRSFARREGGAVLDGRDIGTVICPEAEVKLFVTASDEERARRRWLELAAKGGTQSEAEILADLRERDRRDREREAAPLRPAPDALLLDTTELTIDAAVNKAIEAIELRQAQGRE.

9-17 is a binding site for ATP; the sequence is GPAAAGKGT. A compositionally biased stretch (basic and acidic residues) spans 155-168; the sequence is LRERDRRDREREAA. The disordered stretch occupies residues 155–174; the sequence is LRERDRRDREREAAPLRPAP.

The protein belongs to the cytidylate kinase family. Type 1 subfamily.

The protein localises to the cytoplasm. It catalyses the reaction CMP + ATP = CDP + ADP. The catalysed reaction is dCMP + ATP = dCDP + ADP. The polypeptide is Cytidylate kinase (Cereibacter sphaeroides (strain KD131 / KCTC 12085) (Rhodobacter sphaeroides)).